Consider the following 490-residue polypeptide: Thiamine biosynthesis bifunctional protein ThiED (490 aa).

Residues 1–213 are thiamine-phosphate synthase; it reads MASNGHTLRL…PDPALAATEI (213 aa). Residues 50 to 54 and asparagine 82 each bind 4-amino-2-methyl-5-(diphosphooxymethyl)pyrimidine; that span reads QYRNK. Positions 83 and 102 each coordinate Mg(2+). Serine 121 serves as a coordination point for 4-amino-2-methyl-5-(diphosphooxymethyl)pyrimidine. 147–149 lines the 2-[(2R,5Z)-2-carboxy-4-methylthiazol-5(2H)-ylidene]ethyl phosphate pocket; sequence SRS. 4-amino-2-methyl-5-(diphosphooxymethyl)pyrimidine is bound at residue lysine 150. 2-[(2R,5Z)-2-carboxy-4-methylthiazol-5(2H)-ylidene]ethyl phosphate contacts are provided by residues glycine 177 and 197-198; that span reads IS. A hydroxymethylpyrimidine/phosphomethylpyrimidine kinase region spans residues 229-490; that stretch reads LTVAGSDSGG…ILAAEDVRDR (262 aa). Residue glutamine 266 coordinates 4-amino-5-hydroxymethyl-2-methylpyrimidine.

The protein in the N-terminal section; belongs to the thiamine-phosphate synthase family. It in the C-terminal section; belongs to the ThiD family. Mg(2+) is required as a cofactor.

The catalysed reaction is 2-[(2R,5Z)-2-carboxy-4-methylthiazol-5(2H)-ylidene]ethyl phosphate + 4-amino-2-methyl-5-(diphosphooxymethyl)pyrimidine + 2 H(+) = thiamine phosphate + CO2 + diphosphate. The enzyme catalyses 2-(2-carboxy-4-methylthiazol-5-yl)ethyl phosphate + 4-amino-2-methyl-5-(diphosphooxymethyl)pyrimidine + 2 H(+) = thiamine phosphate + CO2 + diphosphate. It carries out the reaction 4-methyl-5-(2-phosphooxyethyl)-thiazole + 4-amino-2-methyl-5-(diphosphooxymethyl)pyrimidine + H(+) = thiamine phosphate + diphosphate. It catalyses the reaction 4-amino-5-hydroxymethyl-2-methylpyrimidine + ATP = 4-amino-2-methyl-5-(phosphooxymethyl)pyrimidine + ADP + H(+). The catalysed reaction is 4-amino-2-methyl-5-(phosphooxymethyl)pyrimidine + ATP = 4-amino-2-methyl-5-(diphosphooxymethyl)pyrimidine + ADP. It functions in the pathway cofactor biosynthesis; thiamine diphosphate biosynthesis; 4-amino-2-methyl-5-diphosphomethylpyrimidine from 5-amino-1-(5-phospho-D-ribosyl)imidazole: step 3/3. Its pathway is cofactor biosynthesis; thiamine diphosphate biosynthesis; thiamine phosphate from 4-amino-2-methyl-5-diphosphomethylpyrimidine and 4-methyl-5-(2-phosphoethyl)-thiazole: step 1/1. Its function is as follows. Condenses 4-methyl-5-(beta-hydroxyethyl)thiazole monophosphate (THZ-P) and 2-methyl-4-amino-5-hydroxymethyl pyrimidine pyrophosphate (HMP-PP) to form thiamine monophosphate (TMP). Catalyzes the phosphorylation of hydroxymethylpyrimidine phosphate (HMP-P) to HMP-PP, and of HMP to HMP-P. This Geobacter sulfurreducens (strain ATCC 51573 / DSM 12127 / PCA) protein is Thiamine biosynthesis bifunctional protein ThiED (thiDE).